A 276-amino-acid chain; its full sequence is Inositol-1-monophosphatase ImpA (276 aa).

4 residues coordinate Mg(2+): E74, D90, I92, and D93. Residue E74 coordinates substrate. Substrate contacts are provided by residues 92-95, R192, and D221; that span reads IDGT. D221 provides a ligand contact to Mg(2+).

Belongs to the inositol monophosphatase superfamily. It depends on Mg(2+) as a cofactor.

It catalyses the reaction a myo-inositol phosphate + H2O = myo-inositol + phosphate. It functions in the pathway polyol metabolism; myo-inositol biosynthesis; myo-inositol from D-glucose 6-phosphate: step 2/2. Functionally, catalyzes the dephosphorylation of inositol 1-phosphate (I-1-P) to yield free myo-inositol, a key metabolite in mycobacteria. This chain is Inositol-1-monophosphatase ImpA (impA), found in Mycolicibacterium smegmatis (strain ATCC 700084 / mc(2)155) (Mycobacterium smegmatis).